A 399-amino-acid chain; its full sequence is Beta-1,4-galactosyltransferase 1 (399 aa).

Residues 1-24 (MRFREQFLGGSAAMPGATLQRACR) lie on the Cytoplasmic side of the membrane. A helical; Signal-anchor for type II membrane protein membrane pass occupies residues 25–44 (LLVAVCALHLGVTLVYYLSG). At 45 to 399 (RDLSRLPQLV…QITVDIGTPR (355 aa)) the chain is on the lumenal side. Residues 61–113 (QGGTNGAAASKQPPGEQRPRGARPPPPLGVSPKPRPGLDSSPGAASGPGLKSN) are disordered. Pro residues predominate over residues 82–95 (ARPPPPLGVSPKPR). A glycan (N-linked (GlcNAc...) asparagine) is linked at asparagine 113. An intrachain disulfide couples cysteine 131 to cysteine 173. UDP-alpha-D-galactose is bound by residues 184-188 (PFRNR), 223-225 (FNR), 250-251 (VD), and tryptophan 311. Cysteine 244 and cysteine 263 are disulfide-bonded. Aspartate 251 contributes to the Mn(2+) binding site. 313-316 (GEDD) contributes to the N-acetyl-D-glucosamine binding site. Histidine 344 contributes to the Mn(2+) binding site. Residue 344–346 (HSR) participates in UDP-alpha-D-galactose binding. Arginine 356 provides a ligand contact to N-acetyl-D-glucosamine.

This sequence belongs to the glycosyltransferase 7 family. Homodimer; and heterodimer with alpha-lactalbumin to form lactose synthase. Interacts (via N-terminal cytoplasmic domain) with UBE2Q1 (via N-terminus); the interaction is direct. Requires Mn(2+) as cofactor. In terms of processing, the soluble form derives from the membrane forms by proteolytic processing.

It is found in the golgi apparatus. Its subcellular location is the golgi stack membrane. The protein localises to the cell membrane. The protein resides in the cell surface. It localises to the cell projection. It is found in the filopodium. Its subcellular location is the secreted. It carries out the reaction D-glucose + UDP-alpha-D-galactose = lactose + UDP + H(+). The catalysed reaction is an N-acetyl-beta-D-glucosaminyl derivative + UDP-alpha-D-galactose = a beta-D-galactosyl-(1-&gt;4)-N-acetyl-beta-D-glucosaminyl derivative + UDP + H(+). It catalyses the reaction N-acetyl-D-glucosamine + UDP-alpha-D-galactose = beta-D-galactosyl-(1-&gt;4)-N-acetyl-D-glucosamine + UDP + H(+). The enzyme catalyses a beta-D-GlcNAc-(1-&gt;3)-beta-D-Gal-(1-&gt;4)-beta-D-Glc-(1&lt;-&gt;1)-Cer(d18:1(4E)) + UDP-alpha-D-galactose = a neolactoside nLc4Cer(d18:1(4E)) + UDP + H(+). It carries out the reaction a beta-D-glucosylceramide + UDP-alpha-D-galactose = a beta-D-galactosyl-(1-&gt;4)-beta-D-glucosyl-(1&lt;-&gt;1)-ceramide + UDP + H(+). The catalysed reaction is a neolactoside IV(3)-beta-GlcNAc-nLc4Cer + UDP-alpha-D-galactose = a neolactoside nLc6Cer + UDP + H(+). The protein operates within protein modification; protein glycosylation. In terms of biological role, the Golgi complex form catalyzes the production of lactose in the lactating mammary gland and could also be responsible for the synthesis of complex-type N-linked oligosaccharides in many glycoproteins as well as the carbohydrate moieties of glycolipids. Functionally, the cell surface form functions as a recognition molecule during a variety of cell to cell and cell to matrix interactions, as those occurring during development and egg fertilization, by binding to specific oligosaccharide ligands on opposing cells or in the extracellular matrix. The secreted form is responsible for the synthesis of complex-type to N-linked oligosaccharides in many glycoproteins as well as the carbohydrate moieties of glycolipids. This chain is Beta-1,4-galactosyltransferase 1, found in Mus musculus (Mouse).